The following is a 259-amino-acid chain: Global transcriptional regulator CodY (259 aa).

The interval 1–155 (MNLLEKTRKI…GATVVGMEIL (155 aa)) is GAF domain. The segment at residues 203–222 (ASKIADRVGITRSVIVNALR) is a DNA-binding region (H-T-H motif). Position 215 is a phosphoserine (S215).

The protein belongs to the CodY family.

It localises to the cytoplasm. In terms of biological role, DNA-binding global transcriptional regulator which is involved in the adaptive response to starvation and acts by directly or indirectly controlling the expression of numerous genes in response to nutrient availability. During rapid exponential growth, CodY is highly active and represses genes whose products allow adaptation to nutrient depletion. In Anoxybacillus flavithermus (strain DSM 21510 / WK1), this protein is Global transcriptional regulator CodY.